Consider the following 295-residue polypeptide: Fructose-bisphosphate aldolase class 1 (295 aa).

Residue glutamate 176 is the Proton acceptor of the active site. The active-site Schiff-base intermediate with dihydroxyacetone-P is the lysine 213.

Belongs to the class I fructose-bisphosphate aldolase family.

The catalysed reaction is beta-D-fructose 1,6-bisphosphate = D-glyceraldehyde 3-phosphate + dihydroxyacetone phosphate. Its pathway is carbohydrate degradation; glycolysis; D-glyceraldehyde 3-phosphate and glycerone phosphate from D-glucose: step 4/4. The polypeptide is Fructose-bisphosphate aldolase class 1 (Clostridium beijerinckii (strain ATCC 51743 / NCIMB 8052) (Clostridium acetobutylicum)).